The sequence spans 490 residues: Glutamyl-tRNA(Gln) amidotransferase subunit A (490 aa).

Residues Lys78 and Ser159 each act as charge relay system in the active site. Ser183 acts as the Acyl-ester intermediate in catalysis.

Belongs to the amidase family. GatA subfamily. Heterotrimer of A, B and C subunits.

The catalysed reaction is L-glutamyl-tRNA(Gln) + L-glutamine + ATP + H2O = L-glutaminyl-tRNA(Gln) + L-glutamate + ADP + phosphate + H(+). In terms of biological role, allows the formation of correctly charged Gln-tRNA(Gln) through the transamidation of misacylated Glu-tRNA(Gln) in organisms which lack glutaminyl-tRNA synthetase. The reaction takes place in the presence of glutamine and ATP through an activated gamma-phospho-Glu-tRNA(Gln). This Paramagnetospirillum magneticum (strain ATCC 700264 / AMB-1) (Magnetospirillum magneticum) protein is Glutamyl-tRNA(Gln) amidotransferase subunit A.